Here is a 117-residue protein sequence, read N- to C-terminus: Ribosome-binding factor A (117 aa).

Belongs to the RbfA family. Monomer. Binds 30S ribosomal subunits, but not 50S ribosomal subunits or 70S ribosomes.

It localises to the cytoplasm. In terms of biological role, one of several proteins that assist in the late maturation steps of the functional core of the 30S ribosomal subunit. Associates with free 30S ribosomal subunits (but not with 30S subunits that are part of 70S ribosomes or polysomes). Required for efficient processing of 16S rRNA. May interact with the 5'-terminal helix region of 16S rRNA. This chain is Ribosome-binding factor A, found in Anaplasma marginale (strain St. Maries).